Consider the following 384-residue polypeptide: Epoxyqueuosine reductase (384 aa).

Asp144 functions as the Proton donor in the catalytic mechanism. One can recognise a 4Fe-4S ferredoxin-type domain in the interval Leu186 to Thr218. The [4Fe-4S] cluster site is built by Cys198, Cys201, Cys204, Cys208, Cys224, Cys251, Cys254, and Cys258.

This sequence belongs to the QueG family. As to quaternary structure, monomer. It depends on cob(II)alamin as a cofactor. The cofactor is [4Fe-4S] cluster.

It is found in the cytoplasm. The enzyme catalyses epoxyqueuosine(34) in tRNA + AH2 = queuosine(34) in tRNA + A + H2O. Its pathway is tRNA modification; tRNA-queuosine biosynthesis. Functionally, catalyzes the conversion of epoxyqueuosine (oQ) to queuosine (Q), which is a hypermodified base found in the wobble positions of tRNA(Asp), tRNA(Asn), tRNA(His) and tRNA(Tyr). The polypeptide is Epoxyqueuosine reductase (Salmonella typhimurium (strain LT2 / SGSC1412 / ATCC 700720)).